The following is a 157-amino-acid chain: Lectin (157 aa).

Cysteine 37 and cysteine 54 are oxidised to a cystine.

As to quaternary structure, homodimer. Detected in fruits (at protein level).

Its subcellular location is the secreted. Functionally, binds with high affinity specifically to chito-oligosaccharides. May play a role in plant defense against pathogens by directly binding with the chitin cell wall. Forms filamentous structures at higher concentrations and may promote wound healing by forming filaments with phloem proteins like PP1. This Coccinia grandis (Ivy gourd) protein is Lectin.